Reading from the N-terminus, the 359-residue chain is N-acetyl-gamma-glutamyl-phosphate reductase (359 aa).

Cys162 is an active-site residue.

This sequence belongs to the NAGSA dehydrogenase family. Type 1 subfamily.

The protein resides in the cytoplasm. It catalyses the reaction N-acetyl-L-glutamate 5-semialdehyde + phosphate + NADP(+) = N-acetyl-L-glutamyl 5-phosphate + NADPH + H(+). Its pathway is amino-acid biosynthesis; L-arginine biosynthesis; N(2)-acetyl-L-ornithine from L-glutamate: step 3/4. In terms of biological role, catalyzes the NADPH-dependent reduction of N-acetyl-5-glutamyl phosphate to yield N-acetyl-L-glutamate 5-semialdehyde. This chain is N-acetyl-gamma-glutamyl-phosphate reductase, found in Prochlorococcus marinus (strain NATL1A).